A 313-amino-acid polypeptide reads, in one-letter code: NAD-capped RNA hydrolase NudC (313 aa).

R111 provides a ligand contact to substrate. Residues 168–293 (PRIDPAVICL…DWSSASESKL (126 aa)) enclose the Nudix hydrolase domain. A divalent metal cation-binding residues include A202, E218, and E222. The Nudix box motif lies at 203–224 (GFVEAGESFEVCVAREIREEIG). 236–243 (QPWPFPRS) contacts substrate. E264 is a binding site for a divalent metal cation.

The protein belongs to the Nudix hydrolase family. NudC subfamily. As to quaternary structure, homodimer. Requires Mg(2+) as cofactor. The cofactor is Mn(2+).

It carries out the reaction a 5'-end NAD(+)-phospho-ribonucleoside in mRNA + H2O = a 5'-end phospho-adenosine-phospho-ribonucleoside in mRNA + beta-nicotinamide D-ribonucleotide + 2 H(+). It catalyses the reaction NAD(+) + H2O = beta-nicotinamide D-ribonucleotide + AMP + 2 H(+). The enzyme catalyses NADH + H2O = reduced beta-nicotinamide D-ribonucleotide + AMP + 2 H(+). In terms of biological role, mRNA decapping enzyme that specifically removes the nicotinamide adenine dinucleotide (NAD) cap from a subset of mRNAs by hydrolyzing the diphosphate linkage to produce nicotinamide mononucleotide (NMN) and 5' monophosphate mRNA. The NAD-cap is present at the 5'-end of some mRNAs and stabilizes RNA against 5'-processing. Has preference for mRNAs with a 5'-end purine. Catalyzes the hydrolysis of a broad range of dinucleotide pyrophosphates. This is NAD-capped RNA hydrolase NudC from Mycobacterium bovis (strain ATCC BAA-935 / AF2122/97).